The following is a 901-amino-acid chain: Alanine--tRNA ligase (901 aa).

Zn(2+) contacts are provided by His581, His585, Cys684, and His688.

It belongs to the class-II aminoacyl-tRNA synthetase family. It depends on Zn(2+) as a cofactor.

It localises to the cytoplasm. The catalysed reaction is tRNA(Ala) + L-alanine + ATP = L-alanyl-tRNA(Ala) + AMP + diphosphate. Its function is as follows. Catalyzes the attachment of alanine to tRNA(Ala) in a two-step reaction: alanine is first activated by ATP to form Ala-AMP and then transferred to the acceptor end of tRNA(Ala). Also edits incorrectly charged Ser-tRNA(Ala) and Gly-tRNA(Ala) via its editing domain. The chain is Alanine--tRNA ligase from Mycobacterium ulcerans (strain Agy99).